A 408-amino-acid chain; its full sequence is tRNA(Met) cytidine acetate ligase (408 aa).

ATP-binding positions include 7 to 20 (IVEYNPFHNGHKYH), Gly-102, Asn-170, and 195 to 196 (RI).

Belongs to the TmcAL family.

It is found in the cytoplasm. It catalyses the reaction cytidine(34) in elongator tRNA(Met) + acetate + ATP = N(4)-acetylcytidine(34) in elongator tRNA(Met) + AMP + diphosphate. In terms of biological role, catalyzes the formation of N(4)-acetylcytidine (ac(4)C) at the wobble position of elongator tRNA(Met), using acetate and ATP as substrates. First activates an acetate ion to form acetyladenylate (Ac-AMP) and then transfers the acetyl group to tRNA to form ac(4)C34. The chain is tRNA(Met) cytidine acetate ligase from Clostridium kluyveri (strain NBRC 12016).